We begin with the raw amino-acid sequence, 122 residues long: Small ribosomal subunit protein uS13 (122 aa).

Residues 93–122 (RRGLPVRGQNTKTNARTRKGPKRTAGGKKK) form a disordered region. Basic residues predominate over residues 107–122 (ARTRKGPKRTAGGKKK).

The protein belongs to the universal ribosomal protein uS13 family. Part of the 30S ribosomal subunit. Forms a loose heterodimer with protein S19. Forms two bridges to the 50S subunit in the 70S ribosome.

Functionally, located at the top of the head of the 30S subunit, it contacts several helices of the 16S rRNA. In the 70S ribosome it contacts the 23S rRNA (bridge B1a) and protein L5 of the 50S subunit (bridge B1b), connecting the 2 subunits; these bridges are implicated in subunit movement. Contacts the tRNAs in the A and P-sites. This chain is Small ribosomal subunit protein uS13, found in Syntrophomonas wolfei subsp. wolfei (strain DSM 2245B / Goettingen).